A 462-amino-acid polypeptide reads, in one-letter code: Putative zinc metalloprotease RSc1411 (462 aa).

Residues 1–21 (MLTVLAFVFAIAVLIVVHELG) form a helical membrane-spanning segment. Zn(2+) is bound at residue His-18. The active site involves Glu-19. His-22 contributes to the Zn(2+) binding site. A helical transmembrane segment spans residues 102–124 (FAIVAAGPVFNFLLAIALYALLA). The PDZ domain occupies 201-283 (TVRLRELPSA…MPEQNASIDI (83 aa)). 2 helical membrane passes run 386–406 (FVAFLALISVSLGVLNLLPVP) and 430–450 (WQAVLQKIGIACILLLTSLAL).

This sequence belongs to the peptidase M50B family. Zn(2+) is required as a cofactor.

It localises to the cell inner membrane. This is Putative zinc metalloprotease RSc1411 from Ralstonia nicotianae (strain ATCC BAA-1114 / GMI1000) (Ralstonia solanacearum).